The chain runs to 478 residues: Serine carboxypeptidase-like 33 (478 aa).

Residues 1–33 (MNLTLPMKKQKFLLIISLLILLSLLHQDYHIEA) form the signal peptide. 3 cysteine pairs are disulfide-bonded: Cys-95/Cys-361, Cys-257/Cys-268, and Cys-292/Cys-330. N-linked (GlcNAc...) asparagine glycans are attached at residues Asn-114 and Asn-146. Ser-188 is a catalytic residue. N-linked (GlcNAc...) asparagine glycosylation is found at Asn-263, Asn-295, and Asn-362. Residues Asp-398 and His-451 contribute to the active site.

It belongs to the peptidase S10 family. As to expression, expressed in senescent leaves and flowers.

Its subcellular location is the secreted. Probable carboxypeptidase. This chain is Serine carboxypeptidase-like 33 (SCPL33), found in Arabidopsis thaliana (Mouse-ear cress).